The primary structure comprises 174 residues: MLRTESCRPRSPAGQVAAASPLLLLLLLLAWCAGACRGAPILPQGLQPEQQLQLWNEIDDTCSSFLSIDSQPQASNALEELCFMIMGMLPKPQEQDEKDNTKRFLFHYSKTQKLGKSNVVSSVVHPLLQLVPHLHERRMKRFRVDEEFQSPFASQSRGYFLFRPRNGRRSAGFI.

Positions 1-34 (MLRTESCRPRSPAGQVAAASPLLLLLLLLAWCAG) are cleaved as a signal peptide. A propeptide spanning residues 35 to 103 (ACRGAPILPQ…EQDEKDNTKR (69 aa)) is cleaved from the precursor. Methionine 139 carries the post-translational modification Methionine sulfoxide; partial. Residue asparagine 166 is modified to Asparagine amide. The propeptide occupies 170-174 (SAGFI).

Belongs to the NmU family. As to expression, expressed throughout the enteric nervous system with highest levels being found in the jejunum.

It is found in the secreted. Functionally, ligand for receptors NMUR1 and NMUR2. Stimulates muscle contractions of specific regions of the gastrointestinal tract. In humans, NmU stimulates contractions of the ileum and urinary bladder. Its function is as follows. Does not function as a ligand for either NMUR1 or NMUR2. Indirectly induces prolactin release although its potency is much lower than that of neuromedin precursor-related peptide 36. In terms of biological role, does not function as a ligand for either NMUR1 or NMUR2. Indirectly induces prolactin release from lactotroph cells in the pituitary gland, probably via the hypothalamic dopaminergic system. The sequence is that of Neuromedin-U (NMU) from Homo sapiens (Human).